The following is an 89-amino-acid chain: uncharacterized protein (89 aa).

This sequence to M.tuberculosis Rv3402c.

This is an uncharacterized protein from Mycobacterium tuberculosis (strain CDC 1551 / Oshkosh).